The following is a 124-amino-acid chain: Large ribosomal subunit protein eL33 (124 aa).

Alanine 2 is modified (N-acetylalanine).

This sequence belongs to the eukaryotic ribosomal protein eL33 family.

This chain is Large ribosomal subunit protein eL33, found in Caenorhabditis elegans.